Reading from the N-terminus, the 194-residue chain is Der GTPase-activating protein YihI (194 aa).

Residues 1-81 (MSRSKKTRRI…AKVKKDPRVG (81 aa)) form a disordered region. Basic and acidic residues-rich tracts occupy residues 9–23 (RISD…DKKP) and 36–47 (TRYELDVQAREE). Polar residues predominate over residues 59 to 70 (GSRNVITEQKTA).

This sequence belongs to the YihI family. As to quaternary structure, interacts with Der.

Functionally, a GTPase-activating protein (GAP) that modifies Der/EngA GTPase function. May play a role in ribosome biogenesis. The polypeptide is Der GTPase-activating protein YihI (Haemophilus ducreyi (strain 35000HP / ATCC 700724)).